A 401-amino-acid chain; its full sequence is F-box protein At2g43440 (401 aa).

An F-box domain is found at Asn7–Arg53.

The chain is F-box protein At2g43440 from Arabidopsis thaliana (Mouse-ear cress).